Reading from the N-terminus, the 80-residue chain is DNA-directed RNA polymerase subunit Rpo5 (80 aa).

It belongs to the archaeal Rpo5/eukaryotic RPB5 RNA polymerase subunit family. Part of the RNA polymerase complex.

Its subcellular location is the cytoplasm. It catalyses the reaction RNA(n) + a ribonucleoside 5'-triphosphate = RNA(n+1) + diphosphate. Functionally, DNA-dependent RNA polymerase (RNAP) catalyzes the transcription of DNA into RNA using the four ribonucleoside triphosphates as substrates. This is DNA-directed RNA polymerase subunit Rpo5 from Thermofilum pendens (strain DSM 2475 / Hrk 5).